Consider the following 312-residue polypeptide: tRNA-cytidine(32) 2-sulfurtransferase (312 aa).

The PP-loop motif motif lies at 39 to 44 (SGGKDS). The [4Fe-4S] cluster site is built by Cys114, Cys117, and Cys205.

The protein belongs to the TtcA family. As to quaternary structure, homodimer. Mg(2+) serves as cofactor. It depends on [4Fe-4S] cluster as a cofactor.

It localises to the cytoplasm. It carries out the reaction cytidine(32) in tRNA + S-sulfanyl-L-cysteinyl-[cysteine desulfurase] + AH2 + ATP = 2-thiocytidine(32) in tRNA + L-cysteinyl-[cysteine desulfurase] + A + AMP + diphosphate + H(+). The protein operates within tRNA modification. Functionally, catalyzes the ATP-dependent 2-thiolation of cytidine in position 32 of tRNA, to form 2-thiocytidine (s(2)C32). The sulfur atoms are provided by the cysteine/cysteine desulfurase (IscS) system. This is tRNA-cytidine(32) 2-sulfurtransferase from Ralstonia nicotianae (strain ATCC BAA-1114 / GMI1000) (Ralstonia solanacearum).